The chain runs to 126 residues: Aspartate 1-decarboxylase (126 aa).

Catalysis depends on Ser-25, which acts as the Schiff-base intermediate with substrate; via pyruvic acid. Ser-25 carries the pyruvic acid (Ser) modification. Thr-57 provides a ligand contact to substrate. The active-site Proton donor is the Tyr-58. Residue 73-75 (GAA) participates in substrate binding.

This sequence belongs to the PanD family. As to quaternary structure, heterooctamer of four alpha and four beta subunits. Requires pyruvate as cofactor. Post-translationally, is synthesized initially as an inactive proenzyme, which is activated by self-cleavage at a specific serine bond to produce a beta-subunit with a hydroxyl group at its C-terminus and an alpha-subunit with a pyruvoyl group at its N-terminus.

It is found in the cytoplasm. It catalyses the reaction L-aspartate + H(+) = beta-alanine + CO2. The protein operates within cofactor biosynthesis; (R)-pantothenate biosynthesis; beta-alanine from L-aspartate: step 1/1. Catalyzes the pyruvoyl-dependent decarboxylation of aspartate to produce beta-alanine. This is Aspartate 1-decarboxylase from Chromohalobacter salexigens (strain ATCC BAA-138 / DSM 3043 / CIP 106854 / NCIMB 13768 / 1H11).